We begin with the raw amino-acid sequence, 359 residues long: Mitochondrial glutathione transporter SLC25A39 (359 aa).

Over 1–14 (MADQDPAGISPLQQ) the chain is Mitochondrial intermembrane. Solcar repeat units lie at residues 9 to 151 (ISPL…LKAF), 159 to 243 (SDLY…VKSW), and 253 to 347 (TSVG…GKSF). A helical membrane pass occupies residues 15–35 (MVASGTGAVVTSLFMTPLDVV). The Mitochondrial matrix segment spans residues 36-121 (KVRLQSQRPS…VKIVRHEGTR (86 aa)). Cys-74, Cys-78, Cys-88, and Cys-94 together coordinate [2Fe-2S] cluster. A helical membrane pass occupies residues 122–142 (TLWSGLPATLVMTVPATAIYF). Residues 143–160 (TAYDQLKAFLCGRALTSD) lie on the Mitochondrial intermembrane side of the membrane. Residues 161-181 (LYAPMVAGALARLGTVTVISP) traverse the membrane as a helical segment. Over 182-214 (LELMRTKLQAQHVSYRELGACVRTAVAQGGWRS) the chain is Mitochondrial matrix. The helical transmembrane segment at 215 to 235 (LWLGWGPTALRDVPFSALYWF) threads the bilayer. The Mitochondrial intermembrane segment spans residues 236 to 258 (NYELVKSWLNGFRPKDQTSVGMS). A helical membrane pass occupies residues 259 to 279 (FVAGGISGTVAAVLTLPFDVV). The Mitochondrial matrix portion of the chain corresponds to 280-317 (KTQRQVALGAMEAVRVNPLHVDSTWLLLRRIRAESGTK). A helical transmembrane segment spans residues 318 to 338 (GLFAGFLPRIIKAAPSCAIMI). The Mitochondrial intermembrane portion of the chain corresponds to 339–359 (STYEFGKSFFQRLNQDRLLGG).

This sequence belongs to the mitochondrial carrier (TC 2.A.29) family. Cleaved and degraded by AFG3L2; degradation by AFG3L2 is regulated by the ability of SLC25A39 to bind iron-sulfur. In absence of mitochondrial glutathione, SLC25A39 binds iron-sulfur, preventing cleavage and degradation by AFG3L2. The presence of mitochondrial glutathione prevents iron-sulfur-binding to SLC25A39, promoting cleavage and degradation by AFG3L2. As to expression, expressed in many tissues. Abundant in testis and kidney.

It is found in the mitochondrion inner membrane. The enzyme catalyses glutathione(in) = glutathione(out). With respect to regulation, the activity of SLC25A39 is regulated by levels of mitochondrial glutathione via its ability to bind [2Fe-2S] iron-sulfur cluster. Upon physiological levels of mitochondrial glutathione, glutathione prevents iron-sulfur-binding to SLC25A39 promoting cleavage and degradation by AFG3L2. Upon depletion of mitochondrial glutathione, SLC25A39 binds iron-sulfur, preventing cleavage and degradation by AFG3L2. Functionally, mitochondrial transporter required for glutathione import into mitochondria. Glutathione, which plays key roles in oxidative metabolism, is produced exclusively in the cytosol and is imported in many organelles. Mitochondrial glutathione is required for the activity and stability of proteins containing iron-sulfur clusters, as well as erythropoiesis. The sequence is that of Mitochondrial glutathione transporter SLC25A39 from Homo sapiens (Human).